The chain runs to 75 residues: Accessory gland-specific peptide 57Da (75 aa).

The signal sequence occupies residues 1 to 19; the sequence is MKFLALFVTLLVVLALVSA. Residues 55–75 are disordered; it reads AAPAAAPAAPEAGLADAPAES. Over residues 56 to 75 the composition is skewed to low complexity; it reads APAAAPAAPEAGLADAPAES.

As to expression, lumen fluid of male accessory glands, becomes seminal fluid.

It is found in the secreted. In terms of biological role, transferred from male to female during mating and may affect egglaying and behavior after mating. This chain is Accessory gland-specific peptide 57Da (Mst57Da), found in Drosophila melanogaster (Fruit fly).